A 490-amino-acid chain; its full sequence is ABC transporter ATP-binding protein ModF (490 aa).

2 consecutive ABC transporter domains span residues 4 to 235 and 261 to 489; these read LQIL…AHSE and IVLN…LTKI. ATP contacts are provided by residues 36-43 and 293-300; these read GSNGSGKS and GPNGAGKS.

Belongs to the ABC transporter superfamily.

It is found in the cell inner membrane. In terms of biological role, probably not involved in the transport of molybdenum into the cell. This is ABC transporter ATP-binding protein ModF (modF) from Escherichia coli (strain K12).